A 280-amino-acid polypeptide reads, in one-letter code: MSLIREIAGGPYALAAGPDGAMWVTLVHDGAIARVGADGAVDRFPVADGSRPSLISAGPDGALWFTRNGDDRIGRLTTAGELTEFPLSEGSAPFGICAGADGALWFTEMGSGGIGRITVDGETSGWASVGGTPSMITRGPDDAVWFTLNQGNAIGRLHPRDGVTMRELPTRGAGPVGITATHDDAIWFTEILADKLGRIPLDGALQEIDLPGKPHAVVADPSGGVWVSLWGADRLARVSADGDIETFDLPPGSEPHGLAFGPDGGLWVALESGFVLRMPD.

A substrate-binding site is contributed by H215. E254 is a Mg(2+) binding site. The Proton acceptor role is filled by H256. Mg(2+) is bound at residue E271.

This sequence belongs to the Vgb family. In terms of assembly, monomer. Requires Mg(2+) as cofactor.

Inactivates the type B streptogramin antibiotics by linearizing the lactone ring at the ester linkage, generating a free phenylglycine carboxylate and converting the threonyl moiety into 2-amino-butenoic acid. The protein is Virginiamycin B lyase of Mycobacterium sp. (strain JLS).